We begin with the raw amino-acid sequence, 492 residues long: Catalase isozyme 2 (492 aa).

Catalysis depends on residues His-65 and Asn-138. Tyr-348 is a binding site for heme.

This sequence belongs to the catalase family. Homotetramer. Requires heme as cofactor.

Its subcellular location is the peroxisome. The enzyme catalyses 2 H2O2 = O2 + 2 H2O. Functionally, occurs in almost all aerobically respiring organisms and serves to protect cells from the toxic effects of hydrogen peroxide. The polypeptide is Catalase isozyme 2 (CAT2) (Nicotiana plumbaginifolia (Leadwort-leaved tobacco)).